The following is an 807-amino-acid chain: Oxysterol-binding protein 1 (807 aa).

The residue at position 2 (Ala-2) is an N-acetylalanine. A disordered region spans residues Gly-61–Gly-86. Residues Gly-77 to Gly-86 are compositionally biased toward gly residues. The PH domain maps to Gly-88–Ala-181. Residue Leu-117–Ser-122 coordinates a 1,2-diacyl-sn-glycero-3-phospho-(1D-myo-inositol 4-phosphate). Residues Ser-190, Ser-193, Ser-198, Ser-238, and Ser-240 each carry the phosphoserine modification. A coiled-coil region spans residues Gln-291–Thr-326. Residue Gln-314 coordinates 20-hydroxycholesterol. Gln-314 contributes to the 25-hydroxycholesterol binding site. Position 314 (Gln-314) interacts with 7beta-hydroxycholesterol. Gln-314 lines the cholesterol pocket. Gln-314 contributes to the ergosterol binding site. Residues Pro-329–Glu-353 are disordered. Ser-338, Ser-345, and Ser-351 each carry phosphoserine. The FFAT signature appears at Glu-358–Glu-364. Thr-377 bears the Phosphothreonine mark. Ser-379, Ser-382, Ser-385, Ser-386, and Ser-389 each carry phosphoserine. Residues Lys-493 to Asn-496 and His-522 to His-523 each bind a 1,2-diacyl-sn-glycero-3-phospho-(1D-myo-inositol 4-phosphate). A disordered region spans residues Thr-710–Glu-759. Residues Ser-715 to Glu-759 show a composition bias toward basic and acidic residues. The stretch at Asp-730–Asp-760 forms a coiled coil.

The protein belongs to the OSBP family. In terms of assembly, homodimer or homotrimer. Interacts (via FFAT motif) with VAPA. Interacts (via C-terminus) with RELCH (via the third HEAT repeat). Found in a complex composed of RELCH, OSBP1 and RAB11A. As to expression, widely expressed.

It localises to the cytoplasm. Its subcellular location is the cytosol. The protein resides in the perinuclear region. The protein localises to the golgi apparatus membrane. It is found in the endoplasmic reticulum membrane. It localises to the golgi apparatus. Its subcellular location is the trans-Golgi network. Lipid transporter involved in lipid countertransport between the Golgi complex and membranes of the endoplasmic reticulum: specifically exchanges sterol with phosphatidylinositol 4-phosphate (PI4P), delivering sterol to the Golgi in exchange for PI4P, which is degraded by the SAC1/SACM1L phosphatase in the endoplasmic reticulum. Binds cholesterol and a range of oxysterols including 25-hydroxycholesterol. Cholesterol binding promotes the formation of a complex with PP2A and a tyrosine phosphatase which dephosphorylates ERK1/2, whereas 25-hydroxycholesterol causes its disassembly. Regulates cholesterol efflux by decreasing ABCA1 stability. In Homo sapiens (Human), this protein is Oxysterol-binding protein 1.